The sequence spans 398 residues: Protein-glutamate methylesterase/protein-glutamine glutaminase (398 aa).

Residues lysine 4–leucine 121 enclose the Response regulatory domain. The residue at position 55 (aspartate 55) is a 4-aspartylphosphate. A disordered region spans residues arginine 133–serine 200. 2 stretches are compositionally biased toward polar residues: residues arginine 136–isoleucine 146 and arginine 168–serine 200. The CheB-type methylesterase domain maps to serine 205–glycine 398. Active-site residues include serine 217, histidine 244, and aspartate 340.

Belongs to the CheB family. In terms of processing, phosphorylated by CheA. Phosphorylation of the N-terminal regulatory domain activates the methylesterase activity.

It is found in the cytoplasm. The catalysed reaction is [protein]-L-glutamate 5-O-methyl ester + H2O = L-glutamyl-[protein] + methanol + H(+). The enzyme catalyses L-glutaminyl-[protein] + H2O = L-glutamyl-[protein] + NH4(+). In terms of biological role, involved in chemotaxis. Part of a chemotaxis signal transduction system that modulates chemotaxis in response to various stimuli. Catalyzes the demethylation of specific methylglutamate residues introduced into the chemoreceptors (methyl-accepting chemotaxis proteins or MCP) by CheR. Also mediates the irreversible deamidation of specific glutamine residues to glutamic acid. The protein is Protein-glutamate methylesterase/protein-glutamine glutaminase of Shewanella frigidimarina (strain NCIMB 400).